Consider the following 335-residue polypeptide: Beta-ketoacyl-[acyl-carrier-protein] synthase III (335 aa).

Catalysis depends on residues cysteine 116 and histidine 256. Residues 257 to 261 are ACP-binding; that stretch reads QANLR. Residue asparagine 286 is part of the active site.

Belongs to the thiolase-like superfamily. FabH family. In terms of assembly, homodimer.

The protein localises to the cytoplasm. It catalyses the reaction malonyl-[ACP] + acetyl-CoA + H(+) = 3-oxobutanoyl-[ACP] + CO2 + CoA. Its pathway is lipid metabolism; fatty acid biosynthesis. Functionally, catalyzes the condensation reaction of fatty acid synthesis by the addition to an acyl acceptor of two carbons from malonyl-ACP. Catalyzes the first condensation reaction which initiates fatty acid synthesis and may therefore play a role in governing the total rate of fatty acid production. Possesses both acetoacetyl-ACP synthase and acetyl transacylase activities. Its substrate specificity determines the biosynthesis of branched-chain and/or straight-chain of fatty acids. The sequence is that of Beta-ketoacyl-[acyl-carrier-protein] synthase III from Porphyromonas gingivalis (strain ATCC BAA-308 / W83).